The chain runs to 366 residues: Ribosomal RNA large subunit methyltransferase M (366 aa).

Residues Ser188, 221 to 224 (CPGG), Asp240, Asp260, and Asp277 each bind S-adenosyl-L-methionine. Lys306 functions as the Proton acceptor in the catalytic mechanism.

This sequence belongs to the class I-like SAM-binding methyltransferase superfamily. RNA methyltransferase RlmE family. RlmM subfamily. As to quaternary structure, monomer.

It localises to the cytoplasm. It catalyses the reaction cytidine(2498) in 23S rRNA + S-adenosyl-L-methionine = 2'-O-methylcytidine(2498) in 23S rRNA + S-adenosyl-L-homocysteine + H(+). Functionally, catalyzes the 2'-O-methylation at nucleotide C2498 in 23S rRNA. The chain is Ribosomal RNA large subunit methyltransferase M from Salmonella gallinarum (strain 287/91 / NCTC 13346).